The following is a 112-amino-acid chain: Large ribosomal subunit protein uL18 (112 aa).

This sequence belongs to the universal ribosomal protein uL18 family. As to quaternary structure, part of the 50S ribosomal subunit; part of the 5S rRNA/L5/L18/L25 subcomplex. Contacts the 5S and 23S rRNAs.

This is one of the proteins that bind and probably mediate the attachment of the 5S RNA into the large ribosomal subunit, where it forms part of the central protuberance. The sequence is that of Large ribosomal subunit protein uL18 from Deinococcus deserti (strain DSM 17065 / CIP 109153 / LMG 22923 / VCD115).